Consider the following 427-residue polypeptide: UPF0597 protein CD630_32320 (427 aa).

It belongs to the UPF0597 family.

This is UPF0597 protein CD630_32320 from Clostridioides difficile (strain 630) (Peptoclostridium difficile).